We begin with the raw amino-acid sequence, 156 residues long: MSRRHAAEKREILPDAKFGDTVLTKFMNNLMIDGKKSVAESIVYNALDRVQTRLKREPLEAFHEALDNVKPSVEVRSRRVGGATYQVPVEVRTERREALAIRWLITAARKRNENTMEERLAAELADACNNRGTAVKKREDTHKMADANKAFSHYRW.

It belongs to the universal ribosomal protein uS7 family. As to quaternary structure, part of the 30S ribosomal subunit. Contacts proteins S9 and S11.

One of the primary rRNA binding proteins, it binds directly to 16S rRNA where it nucleates assembly of the head domain of the 30S subunit. Is located at the subunit interface close to the decoding center, probably blocks exit of the E-site tRNA. The sequence is that of Small ribosomal subunit protein uS7A/uS7B from Cereibacter sphaeroides (strain ATCC 17029 / ATH 2.4.9) (Rhodobacter sphaeroides).